The sequence spans 574 residues: Ribonuclease Y (574 aa).

The chain crosses the membrane as a helical span at residues 1–21 (MSLLDLVLLLLVLGLGGVLLL). A KH domain is found at 264–327 (AVTVVPIPSD…EIARMALEEL (64 aa)). The HD domain maps to 390–483 (VLKHSIQVAH…VAAADALSAA (94 aa)).

It belongs to the RNase Y family.

Its subcellular location is the cell membrane. Its function is as follows. Endoribonuclease that initiates mRNA decay. In Thermus thermophilus (strain ATCC 27634 / DSM 579 / HB8), this protein is Ribonuclease Y.